We begin with the raw amino-acid sequence, 107 residues long: Large ribosomal subunit protein P2 (107 aa).

Positions 63-83 (SSVPSGGSAPAAAAPSGGAAP) are enriched in low complexity. Residues 63 to 107 (SSVPSGGSAPAAAAPSGGAAPKAEEKKKEEPKEESDDDMGFGLFD) are disordered. Positions 84–93 (KAEEKKKEEP) are enriched in basic and acidic residues.

Belongs to the eukaryotic ribosomal protein P1/P2 family. As to quaternary structure, P1 and P2 exist as dimers at the large ribosomal subunit. Phosphorylated.

Functionally, plays an important role in the elongation step of protein synthesis. This Caenorhabditis elegans protein is Large ribosomal subunit protein P2.